We begin with the raw amino-acid sequence, 100 residues long: Urease subunit gamma (100 aa).

It belongs to the urease gamma subunit family. In terms of assembly, heterotrimer of UreA (gamma), UreB (beta) and UreC (alpha) subunits. Three heterotrimers associate to form the active enzyme.

The protein resides in the cytoplasm. The catalysed reaction is urea + 2 H2O + H(+) = hydrogencarbonate + 2 NH4(+). It participates in nitrogen metabolism; urea degradation; CO(2) and NH(3) from urea (urease route): step 1/1. This chain is Urease subunit gamma, found in Marinomonas sp. (strain MWYL1).